The following is a 183-amino-acid chain: Putative lipoprotein LpqE (183 aa).

The first 30 residues, 1-30 (MSRFKISLPALATRVAVLGFLTLMASVLGG), serve as a signal peptide directing secretion. The N-palmitoyl cysteine moiety is linked to residue Cys-31. The S-diacylglycerol cysteine moiety is linked to residue Cys-31.

The protein resides in the cell membrane. The chain is Putative lipoprotein LpqE (lpqE) from Mycobacterium leprae (strain TN).